Here is a 101-residue protein sequence, read N- to C-terminus: Small ribosomal subunit protein bS18c (101 aa).

It belongs to the bacterial ribosomal protein bS18 family. In terms of assembly, part of the 30S ribosomal subunit.

It is found in the plastid. It localises to the chloroplast. The sequence is that of Small ribosomal subunit protein bS18c from Eucalyptus globulus subsp. globulus (Tasmanian blue gum).